Consider the following 200-residue polypeptide: Urease accessory protein UreG (200 aa).

8 to 15 (GPVGSGKT) is a GTP binding site.

This sequence belongs to the SIMIBI class G3E GTPase family. UreG subfamily. In terms of assembly, homodimer. UreH, UreF and UreG form a complex that acts as a GTP-hydrolysis-dependent molecular chaperone, activating the urease apoprotein by helping to assemble the nickel containing metallocenter of UreC. The UreE protein probably delivers the nickel.

It localises to the cytoplasm. In terms of biological role, facilitates the functional incorporation of the urease nickel metallocenter. This process requires GTP hydrolysis, probably effectuated by UreG. This chain is Urease accessory protein UreG, found in Helicobacter hepaticus (strain ATCC 51449 / 3B1).